A 455-amino-acid polypeptide reads, in one-letter code: MAPPPPHIAVVAFPFSSHAAVLFSFARALAAAAPAGTSLSFLTTADNAAQLRKAGALPGNLRFVEVPDGVPPGETSCLSPPRRMDLFMAAAEAGGVRVGLEAACASAGGARVSCVVGDAFVWTADAASAAGAPWVAVWTAASCALLAHLRTDALRRDVGDQAASRADELLVAHAGLGGYRVRDLPDGVVSGDFNYVISLLVHRQAQRLPKAATAVALNTFPGLDPPDLIAALAAELPNCLPLGPYHLLPGAEPTADTNEAPADPHGCLAWLDRRPARSVAYVSFGTNATARPDELQELAAGLEASGAPFLWSLRGVVAAAPRGFLERAPGLVVPWAPQVGVLRHAAVGAFVTHAGWASVMEGVSSGVPMACRPFFGDQTMNARSVASVWGFGTAFDGPMTRGAVANAVATLLRGEDGERMRAKAQELQAMVGKAFEPDGGCRKNFDEFVEIVCRV.

His-18 functions as the Proton acceptor in the catalytic mechanism. Position 18 (His-18) interacts with an anthocyanidin. Asp-118 (charge relay) is an active-site residue. Position 139 (Thr-139) interacts with UDP-alpha-D-glucose. An an anthocyanidin-binding site is contributed by His-148. UDP-alpha-D-glucose contacts are provided by Ala-336, Gln-338, His-353, Trp-356, Ser-358, and Glu-361. Gly-376 provides a ligand contact to an anthocyanidin. UDP-alpha-D-glucose is bound by residues Asp-377 and Gln-378.

The protein belongs to the UDP-glycosyltransferase family.

It carries out the reaction an anthocyanidin + UDP-alpha-D-glucose + H(+) = an anthocyanidin 3-O-beta-D-glucoside + UDP. Its pathway is pigment biosynthesis; anthocyanin biosynthesis. Its function is as follows. In the presence of other necessary color factors, this glycosylation reaction allows the accumulation of anthocyanin pigments. The protein is Anthocyanidin 3-O-glucosyltransferase (BZ1) of Hordeum vulgare (Barley).